The chain runs to 209 residues: Orotate phosphoribosyltransferase (209 aa).

5-phospho-alpha-D-ribose 1-diphosphate is bound by residues Arg98, Lys102, His104, and 124–132 (EDLISTGKS). Ser128 contributes to the orotate binding site.

Belongs to the purine/pyrimidine phosphoribosyltransferase family. PyrE subfamily. In terms of assembly, homodimer. It depends on Mg(2+) as a cofactor.

The enzyme catalyses orotidine 5'-phosphate + diphosphate = orotate + 5-phospho-alpha-D-ribose 1-diphosphate. Its pathway is pyrimidine metabolism; UMP biosynthesis via de novo pathway; UMP from orotate: step 1/2. Catalyzes the transfer of a ribosyl phosphate group from 5-phosphoribose 1-diphosphate to orotate, leading to the formation of orotidine monophosphate (OMP). This is Orotate phosphoribosyltransferase from Malacoplasma penetrans (strain HF-2) (Mycoplasma penetrans).